Consider the following 408-residue polypeptide: LL-diaminopimelate aminotransferase (408 aa).

Substrate is bound by residues Tyr-15 and Gly-42. Residues Tyr-72, 108–109 (SK), Tyr-132, Asn-187, Tyr-218, and 246–248 (SFS) contribute to the pyridoxal 5'-phosphate site. Positions 109, 132, and 187 each coordinate substrate. Position 249 is an N6-(pyridoxal phosphate)lysine (Lys-249). Pyridoxal 5'-phosphate is bound by residues Arg-257 and Asn-292. 2 residues coordinate substrate: Asn-292 and Arg-388.

It belongs to the class-I pyridoxal-phosphate-dependent aminotransferase family. LL-diaminopimelate aminotransferase subfamily. Homodimer. Pyridoxal 5'-phosphate serves as cofactor.

The enzyme catalyses (2S,6S)-2,6-diaminopimelate + 2-oxoglutarate = (S)-2,3,4,5-tetrahydrodipicolinate + L-glutamate + H2O + H(+). Its pathway is amino-acid biosynthesis; L-lysine biosynthesis via DAP pathway; LL-2,6-diaminopimelate from (S)-tetrahydrodipicolinate (aminotransferase route): step 1/1. In terms of biological role, involved in the synthesis of meso-diaminopimelate (m-DAP or DL-DAP), required for both lysine and peptidoglycan biosynthesis. Catalyzes the direct conversion of tetrahydrodipicolinate to LL-diaminopimelate. Is also able to catalyze the reverse reaction in vitro, i.e. the transamination of LL-diaminopimelate with 2-oxoglutarate to produce tetrahydrodipicolinate and glutamate. Cannot use m-DAP, lysine or ornithine as the amino-group donor, when using 2-oxoglutarate as the amino-group acceptor. Cannot use pyruvate, indole 3-pyruvate, oxaloacetate or phenyl pyruvate as the amino-group acceptor, when using LL-DAP as the amino-group donor. The sequence is that of LL-diaminopimelate aminotransferase from Leptospira interrogans serogroup Icterohaemorrhagiae serovar copenhageni (strain Fiocruz L1-130).